The following is a 419-amino-acid chain: Tetraspanning orphan receptor (419 aa).

Topologically, residues 1–28 (MPRAPALLTNDARHQFTCCLCLHVRTGT) are cytoplasmic. Residues 29-49 (IIFGITQIIIQLVFISFLFLM) traverse the membrane as a helical segment. The Extracellular segment spans residues 50 to 165 (TFNPRLIPED…EVKIKHFSPY (116 aa)). The helical transmembrane segment at 166–186 (IAVCVTTFSLAFCCFMVHGAI) threads the bilayer. The Cytoplasmic portion of the chain corresponds to 187-193 (TKQPTHL). The helical transmembrane segment at 194–214 (LPFFFIQVFDLIICLIHILGF) threads the bilayer. The Extracellular segment spans residues 215 to 240 (MSSTSDLRLMIHTKTGPIYIKSTGFT). The chain crosses the membrane as a helical span at residues 241 to 261 (FIILSISCMMLAFKAYCLGMV). At 262 to 419 (WDCYKYLMLN…SAPSNAHSSC (158 aa)) the chain is on the cytoplasmic side. Over residues 303-316 (NNSIGNSGSPNEPN) the composition is skewed to low complexity. Residues 303-328 (NNSIGNSGSPNEPNTRPRPEPITYDP) form a disordered region.

Interacts (via N-terminal extracellular domain) with human C2a. In terms of processing, phosphorylated on tyrosine residues.

The protein resides in the cell membrane. Cell surface receptor that binds to human complement C2a protein. This results in inhibition of the classical and lectin pathways of complement activation, probably due to interference with binding of C2a to C4b and interference with cleavage by C1 or MASP2 such that C3 convertase cannot be formed. This infers resistance to complement-mediated cell lysis, allowing parasite survival and infection. In Schistosoma mansoni (Blood fluke), this protein is Tetraspanning orphan receptor.